The primary structure comprises 317 residues: 17-beta-hydroxysteroid dehydrogenase type 6 (317 aa).

A signal peptide spans 1–17; that stretch reads MWLYLAVLLGLYYLLRW. 33-57 is a binding site for NAD(+); it reads FITGCDSGFGNQLARQLDLRGLRVL. Asn71 and Asn161 each carry an N-linked (GlcNAc...) asparagine glycan. A substrate-binding site is contributed by Ser164. Tyr176 acts as the Proton acceptor in catalysis.

Belongs to the short-chain dehydrogenases/reductases (SDR) family.

It is found in the microsome membrane. The protein localises to the endoplasmic reticulum membrane. It carries out the reaction all-trans-retinol--[retinol-binding protein] + NAD(+) = all-trans-retinal--[retinol-binding protein] + NADH + H(+). It catalyses the reaction all-trans-retinol + NAD(+) = all-trans-retinal + NADH + H(+). The enzyme catalyses androsterone + NAD(+) = 5alpha-androstan-3,17-dione + NADH + H(+). The catalysed reaction is testosterone + NAD(+) = androst-4-ene-3,17-dione + NADH + H(+). It carries out the reaction 5alpha-androstane-3alpha,17beta-diol + NAD(+) = 17beta-hydroxy-5alpha-androstan-3-one + NADH + H(+). It catalyses the reaction 17beta-estradiol + NAD(+) = estrone + NADH + H(+). The enzyme catalyses 17beta-estradiol + NADP(+) = estrone + NADPH + H(+). The catalysed reaction is 3alpha-hydroxy-5alpha-pregnan-20-one + NAD(+) = 5alpha-pregnane-3,20-dione + NADH + H(+). It carries out the reaction 5alpha-androstane-3beta,17beta-diol + NAD(+) = 17beta-hydroxy-5alpha-androstan-3-one + NADH + H(+). It catalyses the reaction 3beta-hydroxy-5alpha-androstan-17-one + NAD(+) = 5alpha-androstan-3,17-dione + NADH + H(+). Its function is as follows. NAD-dependent oxidoreductase with broad substrate specificity that shows both oxidative and reductive activity (in vitro). Has 17-beta-hydroxysteroid dehydrogenase activity towards various steroids (in vitro). Converts 5-alpha-androstan-3-alpha,17-beta-diol to androsterone and estradiol to estrone (in vitro). Has 3-alpha-hydroxysteroid dehydrogenase activity towards androsterone (in vitro). Has retinol dehydrogenase activity towards all-trans-retinol (in vitro). Can convert androsterone to epi-androsterone. Androsterone is first oxidized to 5-alpha-androstane-3,17-dione and then reduced to epi-andosterone. Can act on both C-19 and C-21 3-alpha-hydroxysteroids. This chain is 17-beta-hydroxysteroid dehydrogenase type 6 (HSD17B6), found in Bos taurus (Bovine).